A 733-amino-acid chain; its full sequence is Methionine--tRNA ligase (733 aa).

The 'HIGH' region signature appears at proline 11–histidine 21. The Zn(2+) site is built by cysteine 143, cysteine 146, cysteine 156, and cysteine 159. Positions lysine 345–serine 349 match the 'KMSKS' region motif. Threonine 348 lines the ATP pocket. One can recognise a tRNA-binding domain in the interval aspartate 633–arginine 733.

This sequence belongs to the class-I aminoacyl-tRNA synthetase family. MetG type 1 subfamily. As to quaternary structure, homodimer. Requires Zn(2+) as cofactor.

It is found in the cytoplasm. The enzyme catalyses tRNA(Met) + L-methionine + ATP = L-methionyl-tRNA(Met) + AMP + diphosphate. In terms of biological role, is required not only for elongation of protein synthesis but also for the initiation of all mRNA translation through initiator tRNA(fMet) aminoacylation. This Thermococcus onnurineus (strain NA1) protein is Methionine--tRNA ligase.